A 54-amino-acid chain; its full sequence is Ovomucoid (54 aa).

The Kazal-like domain maps to 4-54; sequence VDCSGYPTHACTLELKPLCGSDNQTYSNKCGFCNAVAQSNGTLTLSHFGKC. Disulfide bonds link Cys-6–Cys-36, Cys-14–Cys-33, and Cys-22–Cys-54. An N-linked (GlcNAc...) asparagine glycan is attached at Asn-43.

It localises to the secreted. This chain is Ovomucoid, found in Leipoa ocellata (Malleefowl).